The primary structure comprises 94 residues: Enhancer of yellow 2 transcription factor (94 aa).

It belongs to the ENY2 family. As to quaternary structure, component of the nuclear pore complex (NPC)-associated AMEX complex (anchoring and mRNA export complex), composed of at least e(y)2 and xmas-2. Component of the SAGA transcription coactivator-HAT complexes, at least composed of Ada2b, e(y)2, Pcaf/Gcn5, Taf10 and Nipped-A/Trrap. Within the SAGA complex, e(y)2, Sgf11, and not/nonstop form an additional subcomplex of SAGA called the DUB module (deubiquitination module). Component of the THO complex, composed of at least e(y)2, HPR1, THO2, THOC5, THOC6 and THOC7. Interacts with e(y)1. Interacts with su(Hw) (via zinc fingers). Interacts with xmas-2; required for localization to the nuclear periphery. Interacts with the nuclear pore complex (NPC).

It is found in the nucleus. Its subcellular location is the nucleoplasm. It localises to the cytoplasm. Functionally, involved in mRNA export coupled transcription activation by association with both the AMEX and the SAGA complexes. The SAGA complex is a multiprotein complex that activates transcription by remodeling chromatin and mediating histone acetylation and deubiquitination. Within the SAGA complex, participates in a subcomplex that specifically deubiquitinates histone H2B. The SAGA complex is recruited to specific gene promoters by activators, where it is required for transcription. Required for nuclear receptor-mediated transactivation. Involved in transcription elongation by recruiting the THO complex onto nascent mRNA. The AMEX complex functions in docking export-competent ribonucleoprotein particles (mRNPs) to the nuclear entrance of the nuclear pore complex (nuclear basket). AMEX participates in mRNA export and accurate chromatin positioning in the nucleus by tethering genes to the nuclear periphery. The polypeptide is Enhancer of yellow 2 transcription factor (Drosophila grimshawi (Hawaiian fruit fly)).